A 441-amino-acid polypeptide reads, in one-letter code: Probable carboxypeptidase NFIA_052450 (441 aa).

The N-terminal stretch at methionine 1–alanine 16 is a signal peptide. N-linked (GlcNAc...) asparagine glycosylation is found at asparagine 88 and asparagine 150. A Zn(2+)-binding site is contributed by aspartate 166. The active-site Proton acceptor is the glutamate 198. A Zn(2+)-binding site is contributed by glutamate 199. N-linked (GlcNAc...) asparagine glycans are attached at residues asparagine 354 and asparagine 373.

The protein belongs to the peptidase M20A family. Zn(2+) serves as cofactor.

The protein localises to the secreted. The chain is Probable carboxypeptidase NFIA_052450 from Neosartorya fischeri (strain ATCC 1020 / DSM 3700 / CBS 544.65 / FGSC A1164 / JCM 1740 / NRRL 181 / WB 181) (Aspergillus fischerianus).